A 270-amino-acid chain; its full sequence is Dihydroorotate dehydrogenase B (NAD(+)), catalytic subunit (270 aa).

FMN-binding positions include serine 12 and 35–36 (KT). Residues lysine 35, 59-63 (NRIGL), and asparagine 114 each bind substrate. Asparagine 114 serves as a coordination point for FMN. Cysteine 117 functions as the Nucleophile in the catalytic mechanism. 2 residues coordinate FMN: lysine 153 and valine 179. 180 to 181 (NT) serves as a coordination point for substrate. FMN contacts are provided by residues glycine 199, 226–227 (GG), and 248–249 (GS).

The protein belongs to the dihydroorotate dehydrogenase family. Type 1 subfamily. In terms of assembly, heterotetramer of 2 PyrK and 2 PyrD type B subunits. The cofactor is FMN.

It is found in the cytoplasm. It catalyses the reaction (S)-dihydroorotate + NAD(+) = orotate + NADH + H(+). Its pathway is pyrimidine metabolism; UMP biosynthesis via de novo pathway; orotate from (S)-dihydroorotate (NAD(+) route): step 1/1. Its function is as follows. Catalyzes the conversion of dihydroorotate to orotate with NAD(+) as electron acceptor. The protein is Dihydroorotate dehydrogenase B (NAD(+)), catalytic subunit (pyrD) of Thermotoga maritima (strain ATCC 43589 / DSM 3109 / JCM 10099 / NBRC 100826 / MSB8).